We begin with the raw amino-acid sequence, 149 residues long: Transcriptional regulator MraZ (149 aa).

2 consecutive SpoVT-AbrB domains span residues 6–52 (RSHR…PLPD) and 81–124 (AELM…DQGR).

It belongs to the MraZ family. Forms oligomers.

The protein resides in the cytoplasm. Its subcellular location is the nucleoid. The chain is Transcriptional regulator MraZ from Nitratidesulfovibrio vulgaris (strain DSM 19637 / Miyazaki F) (Desulfovibrio vulgaris).